Reading from the N-terminus, the 417-residue chain is NADH-quinone oxidoreductase subunit D (417 aa).

It belongs to the complex I 49 kDa subunit family. As to quaternary structure, NDH-1 is composed of 14 different subunits. Subunits NuoB, C, D, E, F, and G constitute the peripheral sector of the complex.

The protein resides in the cell inner membrane. The enzyme catalyses a quinone + NADH + 5 H(+)(in) = a quinol + NAD(+) + 4 H(+)(out). Functionally, NDH-1 shuttles electrons from NADH, via FMN and iron-sulfur (Fe-S) centers, to quinones in the respiratory chain. The immediate electron acceptor for the enzyme in this species is believed to be ubiquinone. Couples the redox reaction to proton translocation (for every two electrons transferred, four hydrogen ions are translocated across the cytoplasmic membrane), and thus conserves the redox energy in a proton gradient. The protein is NADH-quinone oxidoreductase subunit D of Polaromonas sp. (strain JS666 / ATCC BAA-500).